The following is a 157-amino-acid chain: Protein Smg (157 aa).

The protein belongs to the Smg family.

In Klebsiella pneumoniae (strain 342), this protein is Protein Smg.